The chain runs to 945 residues: Leucine--tRNA ligase (945 aa).

The 'HIGH' region motif lies at 43–53 (PYPNGAIHIGH). Positions 638–642 (KMSKS) match the 'KMSKS' region motif. Lys641 is a binding site for ATP.

The protein belongs to the class-I aminoacyl-tRNA synthetase family.

It localises to the cytoplasm. The enzyme catalyses tRNA(Leu) + L-leucine + ATP = L-leucyl-tRNA(Leu) + AMP + diphosphate. The chain is Leucine--tRNA ligase from Pyrobaculum arsenaticum (strain DSM 13514 / JCM 11321 / PZ6).